Reading from the N-terminus, the 348-residue chain is Zinc-type alcohol dehydrogenase-like protein C2E1P3.01 (348 aa).

It belongs to the zinc-containing alcohol dehydrogenase family. Quinone oxidoreductase subfamily.

It is found in the mitochondrion. The sequence is that of Zinc-type alcohol dehydrogenase-like protein C2E1P3.01 from Schizosaccharomyces pombe (strain 972 / ATCC 24843) (Fission yeast).